The sequence spans 347 residues: GMP reductase (347 aa).

Residue 108-131 (ADFEKTKQILDLNPALNFVCIDVA) participates in NADP(+) binding. K(+) is bound by residues Gly181 and Gly183. The active-site Thioimidate intermediate is the Cys186. NADP(+) is bound at residue 216–239 (IVSDGGCTTPGDVAKAFGGGADFV).

The protein belongs to the IMPDH/GMPR family. GuaC type 1 subfamily. As to quaternary structure, homotetramer.

The catalysed reaction is IMP + NH4(+) + NADP(+) = GMP + NADPH + 2 H(+). Functionally, catalyzes the irreversible NADPH-dependent deamination of GMP to IMP. It functions in the conversion of nucleobase, nucleoside and nucleotide derivatives of G to A nucleotides, and in maintaining the intracellular balance of A and G nucleotides. The sequence is that of GMP reductase from Escherichia coli O139:H28 (strain E24377A / ETEC).